The chain runs to 458 residues: Morphogenetic regulator of filamentous growth protein 1 (458 aa).

The segment at K401–F458 is disordered. Positions S417–N445 are enriched in polar residues. Residues D446–F458 are compositionally biased toward basic and acidic residues.

Belongs to the MFG1 family. As to quaternary structure, interacts with FLO8 and MSS11, both morphogenetic transcription factors binding directly to the FLO11 promoter.

The protein localises to the nucleus. Transcriptional regulator with a general role in all morphogenetically distinct forms of filamentous growth, namely haploid invasive growth, biofilm formation, and diploid pseudohyphal growth. May control FLO11 gene expression as part of a promoter-bound complex with FLO8 and MSS1. The sequence is that of Morphogenetic regulator of filamentous growth protein 1 (MFG1) from Saccharomyces cerevisiae (strain ATCC 204508 / S288c) (Baker's yeast).